We begin with the raw amino-acid sequence, 310 residues long: Methionyl-tRNA formyltransferase (310 aa).

A (6S)-5,6,7,8-tetrahydrofolate-binding site is contributed by 110–113; sequence SLLP.

It belongs to the Fmt family.

The enzyme catalyses L-methionyl-tRNA(fMet) + (6R)-10-formyltetrahydrofolate = N-formyl-L-methionyl-tRNA(fMet) + (6S)-5,6,7,8-tetrahydrofolate + H(+). Functionally, attaches a formyl group to the free amino group of methionyl-tRNA(fMet). The formyl group appears to play a dual role in the initiator identity of N-formylmethionyl-tRNA by promoting its recognition by IF2 and preventing the misappropriation of this tRNA by the elongation apparatus. The polypeptide is Methionyl-tRNA formyltransferase (Halorhodospira halophila (strain DSM 244 / SL1) (Ectothiorhodospira halophila (strain DSM 244 / SL1))).